The sequence spans 25 residues: Omega conotoxin-CVIF (25 aa).

Cystine bridges form between cysteine 1–cysteine 16, cysteine 8–cysteine 20, and cysteine 15–cysteine 25. Cysteine 25 carries the cysteine amide modification.

It belongs to the conotoxin O1 superfamily. In terms of tissue distribution, expressed by the venom duct.

Its subcellular location is the secreted. Functionally, omega-conotoxins act at presynaptic membranes, they bind and block voltage-gated calcium channels. This toxin blocks N-type calcium channels (Cav2.2/CACNA1B). It shows a higher potency when Cav2.2/CACNA1B is only expressed with the ancillary subunit CACNB3 (IC(50)=0.1 nM) than on Cav2.2/CACNA1B expressed with the ancillary subunits CACNA2D1 and CACNB3 (IC(50)=19.9 nM). The Cav2.2/CACNA1B block by this toxin is voltage-independent, whereas the recovery from toxin block is voltage-dependent. There is a low recovery at physiological membrane potential and a high recovery with hyperpolarized potential. This indicates that the toxin has a higher affinity for Cav2.2/CACNA1B in the inactivated state. It is noteworthy that ancillary subunits beta modulate recovery from this toxin block. Cav2.2/CACNA1B expressed with the ancillary subunit CACNB2a (isoform 2a) almost recover completely from this toxin block, whereas an expression with CACNB3 exhibits relatively weak recovery. Inhibition by this toxin of excitatory synaptic transmission is reversible. In vivo, when tested on rat model of persistent pain, this toxin blocks chronic pain behavior. This Conus catus (Cat cone) protein is Omega conotoxin-CVIF.